The sequence spans 519 residues: Mannuronan C5-epimerase (519 aa).

The first 25 residues, 1 to 25 (MNLHPHLRHSLLASALLLASGLATA), serve as a signal peptide directing secretion. 6 PbH1 repeats span residues 219 to 246 (GTET…SISQ), 281 to 303 (TQDF…DPHD), 305 to 328 (SHRL…IVSR), 330 to 352 (VNDS…VIDR), 354 to 376 (SVNN…TLYE), and 377 to 399 (SGDN…RVRN). The active-site Proton acceptor is H302.

This sequence belongs to the D-mannuronate C5-epimerase family.

The protein localises to the periplasm. The catalysed reaction is [(1-&gt;4)-beta-D-mannuronosyl](n) = [alginate](n). Its pathway is glycan biosynthesis; alginate biosynthesis. In terms of biological role, catalyzes the epimerization of beta-D-mannuronate to alpha-L-guluronate during the synthesis of the linear polysaccharide alginate. In addition, is part of a periplasmic protein complex that protects alginate from degradation by AlgL by channeling the newly formed alginate polymer through a scaffold that transfers the alginate polymer through the periplasmic space to the outer membrane secretin AlgE. This is Mannuronan C5-epimerase (algG) from Pseudomonas putida (strain ATCC 47054 / DSM 6125 / CFBP 8728 / NCIMB 11950 / KT2440).